The chain runs to 426 residues: Enolase (426 aa).

Gln-163 is a (2R)-2-phosphoglycerate binding site. Residue Glu-205 is the Proton donor of the active site. The Mg(2+) site is built by Asp-242, Glu-286, and Asp-313. Positions 338, 367, 368, and 389 each coordinate (2R)-2-phosphoglycerate. Lys-338 serves as the catalytic Proton acceptor.

Belongs to the enolase family. It depends on Mg(2+) as a cofactor.

Its subcellular location is the cytoplasm. The protein resides in the secreted. It localises to the cell surface. It catalyses the reaction (2R)-2-phosphoglycerate = phosphoenolpyruvate + H2O. The protein operates within carbohydrate degradation; glycolysis; pyruvate from D-glyceraldehyde 3-phosphate: step 4/5. Its function is as follows. Catalyzes the reversible conversion of 2-phosphoglycerate (2-PG) into phosphoenolpyruvate (PEP). It is essential for the degradation of carbohydrates via glycolysis. This is Enolase from Helicobacter pylori (strain G27).